The sequence spans 326 residues: tRNA uridine(34) hydroxylase (326 aa).

The 95-residue stretch at 123–217 (ADPEVFVVDT…YLEEVPEEES (95 aa)) folds into the Rhodanese domain. Residue C177 is the Cysteine persulfide intermediate of the active site. Residues 293-326 (AVRGEQHVGGESAKQRQQRRAEKLAKKDVQRKQA) are disordered. Positions 311–326 (RRAEKLAKKDVQRKQA) are enriched in basic and acidic residues.

It belongs to the TrhO family.

It catalyses the reaction uridine(34) in tRNA + AH2 + O2 = 5-hydroxyuridine(34) in tRNA + A + H2O. Functionally, catalyzes oxygen-dependent 5-hydroxyuridine (ho5U) modification at position 34 in tRNAs. This is tRNA uridine(34) hydroxylase from Vibrio campbellii (strain ATCC BAA-1116).